Reading from the N-terminus, the 215-residue chain is Large ribosomal subunit protein uL16 (215 aa).

Belongs to the universal ribosomal protein uL16 family. Component of the small ribosomal subunit. Mature ribosomes consist of a small (40S) and a large (60S) subunit. The 40S subunit contains about 33 different proteins and 1 molecule of RNA (18S). The 60S subunit contains about 49 different proteins and 3 molecules of RNA (25S, 5.8S and 5S).

In Euglena gracilis, this protein is Large ribosomal subunit protein uL16 (RPL10).